The following is a 266-amino-acid chain: Interleukin-1 beta (266 aa).

Residues 1–113 constitute a propeptide that is removed on maturation; the sequence is MATVPEPTNE…ETYDDDLLCD (113 aa).

It belongs to the IL-1 family. In terms of assembly, monomer. In its precursor form, weakly interacts with full-length MEFV; the mature cytokine does not interact at all. Interacts with integrins ITGAV:ITGBV and ITGA5:ITGB1; integrin-binding is required for IL1B signaling. Interacts with cargo receptor TMED10; the interaction is direct and is required for the secretion of IL1B mature form. Interacts with HSP90AB1; the interaction facilitates cargo translocation into the ERGIC. Interacts with HSP90B1; the interaction facilitates cargo translocation into the ERGIC.

The protein resides in the cytoplasm. It localises to the cytosol. It is found in the secreted. The protein localises to the lysosome. Its subcellular location is the extracellular exosome. Functionally, potent pro-inflammatory cytokine. Initially discovered as the major endogenous pyrogen, induces prostaglandin synthesis, neutrophil influx and activation, T-cell activation and cytokine production, B-cell activation and antibody production, and fibroblast proliferation and collagen production. Promotes Th17 differentiation of T-cells. Synergizes with IL12/interleukin-12 to induce IFNG synthesis from T-helper 1 (Th1) cells. Plays a role in angiogenesis by inducing VEGF production synergistically with TNF and IL6. Involved in transduction of inflammation downstream of pyroptosis: its mature form is specifically released in the extracellular milieu by passing through the gasdermin-D (GSDMD) pore. The chain is Interleukin-1 beta (IL1B) from Delphinapterus leucas (Beluga whale).